The primary structure comprises 186 residues: uncharacterized protein (186 aa).

Belongs to the geranylgeranyl reductase family. ChlP subfamily.

This is an uncharacterized protein from Methanosarcina barkeri.